We begin with the raw amino-acid sequence, 216 residues long: Small ribosomal subunit protein uS3 (216 aa).

One can recognise a KH type-2 domain in the interval 24-93 (IKEFLEYRLA…NPQIDVIDVS (70 aa)).

It belongs to the universal ribosomal protein uS3 family. As to quaternary structure, part of the 30S ribosomal subunit.

In terms of biological role, binds the lower part of the 30S subunit head. This chain is Small ribosomal subunit protein uS3, found in Pyrobaculum calidifontis (strain DSM 21063 / JCM 11548 / VA1).